The chain runs to 727 residues: Alpha-1,3-galactosidase A (727 aa).

The segment at 220–241 is disordered; that stretch reads ATNRTWRTSNPVFPERHEDHRP. Residues 221-230 are compositionally biased toward polar residues; sequence TNRTWRTSNP. 6 PbH1 repeats span residues 336-358, 461-483, 484-506, 517-538, 551-572, and 574-603; these read KGTVRITNSVFDNPQDDPINIHG, TPTVEITGNTFQAVPTRGILVTT, RRPVRIENNRFDGMSMASIYISS, VRNVTIRGNVFDRPASPVIFFD, HRNVLIEDNDFNLTGGTILSGR, and VGGLTFRDNRVERYPHLRLTGPSRALRVGD.

It belongs to the glycosyl hydrolase 110 family. A subfamily.

The catalysed reaction is Hydrolysis of terminal, non-reducing branched (1-&gt;3)-alpha-D-galactosidic residues, producing free D-galactose.. It carries out the reaction Hydrolysis of terminal, non-reducing alpha-D-galactose residues in alpha-D-galactosides, including galactose oligosaccharides, galactomannans and galactolipids.. Functionally, alpha-galactosidase that specifically removes branched alpha-1,3-linked galactose residues present in blood group B antigens. Has no activity toward linear alpha-1,3-linked galactose residues. This is Alpha-1,3-galactosidase A (glaA) from Peterkaempfera griseoplana (Streptacidiphilus griseoplanus).